Reading from the N-terminus, the 256-residue chain is uncharacterized protein (256 aa).

The protein belongs to the metallo-beta-lactamase superfamily.

This is an uncharacterized protein from Methanocaldococcus jannaschii (strain ATCC 43067 / DSM 2661 / JAL-1 / JCM 10045 / NBRC 100440) (Methanococcus jannaschii).